The chain runs to 88 residues: Protein A19 homolog (88 aa).

The tract at residues 1–28 (MADSTAGAKKRKKRSTSATSTRKEPPTV) is disordered.

It belongs to the chordopoxvirinae A19 family.

The protein is Protein A19 homolog of Fowlpox virus (strain NVSL) (FPV).